A 217-amino-acid chain; its full sequence is Response regulator RR06 (217 aa).

A Response regulatory domain is found at 2–115; that stretch reads NILVADDEEM…LLVKRIKALI (114 aa). D51 bears the 4-aspartylphosphate mark. The ompR/PhoB-type DNA-binding region spans 122–217; the sequence is EDIWRYQDVT…VKNVGYKISL (96 aa).

In terms of processing, phosphorylated at threonine residues by StkP; threonine phosphorylation enhances RR06 binding to DNA and may also increase expression of CbpA. May be de-phosphorylated by PhpP.

Member of the two-component regulatory system HK06/RR06 involved in regulation of target genes, including choline-binding protein CbpA. Binds to the promoter region of CbpA and directly activates transcription. In Streptococcus pneumoniae serotype 2 (strain D39 / NCTC 7466), this protein is Response regulator RR06.